The primary structure comprises 421 residues: Na(+)/H(+) antiporter NhaA 1 (421 aa).

The next 11 membrane-spanning stretches (helical) occupy residues 48 to 68, 93 to 113, 129 to 149, 157 to 177, 187 to 207, 215 to 235, 253 to 273, 299 to 319, 326 to 346, 364 to 384, and 392 to 412; these read SSGLVLILAAVLAFAWANSPW, LYWWVNDLLMALFFLLVGLEI, SLALFAALGGMLLPAGLYTLV, AGWGVPMATDIAFALGVLALL, VLLAALAILDDLGAVLVIALF, LALGLMGAVWALGLGLNAAGV, LASGLHPTVAGVLLALTIPLG, FLILPLFALFNAGVSVAGGSL, VVLGLIIGKPLGVVAFAWLAV, GLGLLAGIGFTMALFIGGLAF, and AAKLGILTASVLAALAAITVL.

This sequence belongs to the NhaA Na(+)/H(+) (TC 2.A.33) antiporter family.

It is found in the cell membrane. It carries out the reaction Na(+)(in) + 2 H(+)(out) = Na(+)(out) + 2 H(+)(in). In terms of biological role, na(+)/H(+) antiporter that extrudes sodium in exchange for external protons. The sequence is that of Na(+)/H(+) antiporter NhaA 1 from Deinococcus geothermalis (strain DSM 11300 / CIP 105573 / AG-3a).